The chain runs to 213 residues: Na(+)-translocating NADH-quinone reductase subunit D (213 aa).

6 helical membrane-spanning segments follow: residues 21 to 41 (PLIAILGICSALAVTTTVNTA), 42 to 62 (ITMGLAVSFVTGCSSFFVSLL), 69 to 86 (SVRMITQLIIISLFVIVI), 101 to 121 (LSVFVGLIITNCIVMGRAESL), 131 to 151 (FLDGLASGLGYGWVLVTVSIV), and 183 to 203 (FGLMVLAPSAFFLLGIMIWGV).

Belongs to the NqrDE/RnfAE family. Composed of six subunits; NqrA, NqrB, NqrC, NqrD, NqrE and NqrF.

Its subcellular location is the cell inner membrane. It carries out the reaction a ubiquinone + n Na(+)(in) + NADH + H(+) = a ubiquinol + n Na(+)(out) + NAD(+). In terms of biological role, NQR complex catalyzes the reduction of ubiquinone-1 to ubiquinol by two successive reactions, coupled with the transport of Na(+) ions from the cytoplasm to the periplasm. NqrA to NqrE are probably involved in the second step, the conversion of ubisemiquinone to ubiquinol. This is Na(+)-translocating NADH-quinone reductase subunit D from Chlamydia caviae (strain ATCC VR-813 / DSM 19441 / 03DC25 / GPIC) (Chlamydophila caviae).